Reading from the N-terminus, the 348-residue chain is GTPase Obg (348 aa).

Positions 1–159 (MKFVDEVKVH…RELVLELKLM (159 aa)) constitute an Obg domain. In terms of domain architecture, OBG-type G spans 160–331 (ADVGLVGLPN…LLSALVRILS (172 aa)). GTP is bound by residues 166–173 (GLPNAGKS), 191–195 (FTTLI), 213–216 (DIPG), 283–286 (NKVD), and 312–314 (SAR). Mg(2+) contacts are provided by S173 and T193.

This sequence belongs to the TRAFAC class OBG-HflX-like GTPase superfamily. OBG GTPase family. In terms of assembly, monomer. The cofactor is Mg(2+).

The protein localises to the cytoplasm. In terms of biological role, an essential GTPase which binds GTP, GDP and possibly (p)ppGpp with moderate affinity, with high nucleotide exchange rates and a fairly low GTP hydrolysis rate. Plays a role in control of the cell cycle, stress response, ribosome biogenesis and in those bacteria that undergo differentiation, in morphogenesis control. The chain is GTPase Obg from Syntrophobacter fumaroxidans (strain DSM 10017 / MPOB).